The following is a 154-amino-acid chain: MKPLRLIAVGQVRTPYFREACAHYLTAVRRYLPAEEILARDGKSADPARRKAEEAKAVLAALAPRDFVVVLDEHGPSLPSTELAALLKKRIEDPGRAPAFVIGGPFGLDKAVLDRADRLLALGPGTLPHELARVVLYEQLYRAASINAGAPYHH.

Residues L71 and G103 each coordinate S-adenosyl-L-methionine.

This sequence belongs to the RNA methyltransferase RlmH family. In terms of assembly, homodimer.

It localises to the cytoplasm. It catalyses the reaction pseudouridine(1915) in 23S rRNA + S-adenosyl-L-methionine = N(3)-methylpseudouridine(1915) in 23S rRNA + S-adenosyl-L-homocysteine + H(+). Functionally, specifically methylates the pseudouridine at position 1915 (m3Psi1915) in 23S rRNA. This Solidesulfovibrio magneticus (strain ATCC 700980 / DSM 13731 / RS-1) (Desulfovibrio magneticus) protein is Ribosomal RNA large subunit methyltransferase H.